We begin with the raw amino-acid sequence, 209 residues long: MSVQVKLTKNSFRLEKQKLARLQTYLPTLKLKKALLQAEVQNAVKDAAECDKDYVQAYERIYAFAELFSIPLCTDCVEKSFEIQSIDNDFENIAGVEVPIVREVTLFPASYSLLGTPIWLDTMLSASKELVVKKVMAEVSKERLKILEEELRAVSIRVNLFEKKLIPETTKILKKIAVFLSDRSITDVGQVKMAKKKIELRKARGDECV.

This sequence belongs to the V-ATPase D subunit family.

In terms of biological role, produces ATP from ADP in the presence of a proton gradient across the membrane. This chain is V-type ATP synthase subunit D (atpD), found in Chlamydia pneumoniae (Chlamydophila pneumoniae).